Consider the following 527-residue polypeptide: D-3-phosphoglycerate dehydrogenase (527 aa).

Residues 149–150 (RV), Asp-169, 228–230 (AAR), and Asp-254 each bind NAD(+). Residue Arg-230 is part of the active site. Glu-259 is an active-site residue. His-278 acts as the Proton donor in catalysis. 278 to 281 (HIAA) serves as a coordination point for NAD(+). One can recognise an ACT domain in the interval 453–527 (YIISLHEDKP…GIIDATYVEL (75 aa)).

It belongs to the D-isomer specific 2-hydroxyacid dehydrogenase family.

It carries out the reaction (2R)-3-phosphoglycerate + NAD(+) = 3-phosphooxypyruvate + NADH + H(+). Its pathway is amino-acid biosynthesis; L-serine biosynthesis; L-serine from 3-phospho-D-glycerate: step 1/3. In Archaeoglobus fulgidus (strain ATCC 49558 / DSM 4304 / JCM 9628 / NBRC 100126 / VC-16), this protein is D-3-phosphoglycerate dehydrogenase (serA).